A 556-amino-acid polypeptide reads, in one-letter code: MEDLKPRPASSSPLTPLGFLERAATVYGDCTSVVYDAVSYTWSQTHRRCLCLASSIASLGIENGHVVSVLAPNVPQMYELHFAVPMAGAILNAVNLRLDARTISILLHHSESKLIFVDHLSRDLILEAIALFPKQAPVPRLVFMADESESGNSSELGKEFFCSYKDLIDRGDPDFKWVMPKSEWDPMILNYTSGTTSSPKGVVHCHRGIFIMTVDSLIDWGVPKQPVYLWTLPMFHANGWSYPWGMAAVGGTNICLRKFDSEIIYDMIKRHGVTHMCGAPVVLNMLSNAPGSEPLKTTVQIMTAGAPPPSAVLFRTESLGFAVSHGYGLTETAGLVVSCAWKKEWNHLPATERARLKSRQGVGTVMQTKIDVVDPVTGAAVKRDGSTLGEVVLRGGSVMLGYLKDPEGTAKSMTADGWFYTGDVGVMHPDGYLEIKDRSKDVIISGGENLSSVEVESILYSHPDILEAAVVARPDEFWGETPCAFVSLKKGLTKKPTEKEIVEYCRSKLPRYMVPKTVVFKEELPKTSTGKVQKFILRDMARGMGSATAGASRSRM.

ATP is bound by residues 192-200, 325-330, aspartate 423, 435-438, and lysine 531; these read TSGTTSSPK, HGYGLT, and IKDR. Residues 260 to 325 are SBD1; sequence DSEIIYDMIK…TESLGFAVSH (66 aa). The tract at residues 326–402 is SBD2; that stretch reads GYGLTETAGL…LRGGSVMLGY (77 aa).

This sequence belongs to the ATP-dependent AMP-binding enzyme family. As to expression, mostly expressed in old leaves and in cones and glandular trichomes (lupulin glands) after flowering, and, to a lower extent, in stems, young leaves and flowers.

It localises to the cytoplasm. It is found in the cytosol. It carries out the reaction 2-methylpropanoate + ATP + CoA = 2-methylpropanoyl-CoA + AMP + diphosphate. The catalysed reaction is propanoate + ATP + CoA = propanoyl-CoA + AMP + diphosphate. It catalyses the reaction butanoate + ATP + CoA = butanoyl-CoA + AMP + diphosphate. The enzyme catalyses 2-methylbutanoate + ATP + CoA = 2-methylbutanoyl-CoA + AMP + diphosphate. Its pathway is secondary metabolite biosynthesis. Involved in the biosynthesis of prenylated phenolics natural products which contribute to the bitter taste of beer and display broad biological activities. Catalyzes the ligation of CoA on 2-methylpropanoate (isobutyric acid) and 2-methylbutanoate to produce 2-methylpropanoyl-CoA and 2-methylbutanoyl-CoA, respectively. Can also use propanoate and butanoate as substrates with a lower efficiency. In Humulus lupulus (European hop), this protein is 2-methylpropanoate--CoA ligase CCL4.